Reading from the N-terminus, the 297-residue chain is Translocase of chloroplast 33, chloroplastic (297 aa).

The AIG1-type G domain occupies 34-258 (MNSMTVLVLG…HVDKKMVDGS (225 aa)). Residues 37–53 (MTVLVLGKGGVGKSSTV) form a helical membrane-spanning segment. Residues 46–51 (GVGKSS) and 65–70 (SPFQAE) each bind GTP. Mg(2+)-binding residues include Ser50 and Gln68. Homodimerization regions lie at residues 65-68 (SPFQ) and 125-130 (RLDVYR). Residue His160 participates in GTP binding. Ser181 carries the phosphoserine modification. 208–209 (EN) provides a ligand contact to GTP.

This sequence belongs to the TRAFAC class TrmE-Era-EngA-EngB-Septin-like GTPase superfamily. AIG1/Toc34/Toc159-like paraseptin GTPase family. TOC34 subfamily. As to quaternary structure, homodimer, heterodimer with TOC34 and TOC159, and monomer. The homodimerization and the dimerization with TOC159 require the binding of GTP on Arg-130, and a hypothetical coGAP factor. The dimeric form has a higher GTPase activity than the monomeric form. Part of the TOC core complex that includes 1 protein for the specific recognition of transit peptides surrounded by a ring composed of four proteins forming translocation channels, and four to five GTP-binding proteins providing energy. This core complex can interact with components of the TIC complex to form a larger import complex. Chloroplastic protein precursor such as prSS (precursor of the RuBisCO small subunit) interacts with these complexes. The TOC complex contains a specific subset of polar lipids such as digalactosyldiacylglyceride (DGDG), phosphatidylcholine (PC) and phosphatidylglycerol (PG). Interacts at least with TOC75-3. Forms large complexes including TOC33, pPORA and OEP161 during pPORA import into plastids at the plastid envelope membrane. Interacts with SP1. Requires Mg(2+) as cofactor. In terms of processing, phosphorylated by a kinase present in the outer envelope of chloroplast. When Ser-181 is phosphorylated, the binding to preprotein, GTP and GDP is inhibited, and thus, GTPase activity is repressed. As to expression, mostly expressed in seedlings and flowers, and, to a lower extent, in roots, stems, and leaves.

It localises to the plastid. The protein resides in the chloroplast outer membrane. In terms of biological role, GTPase involved in protein precursor import into chloroplasts. Seems to recognize chloroplast-destined precursor proteins and regulate their presentation to the translocation channel through GTP hydrolysis. Binds GTP, GDP, XTP, but not ATP. Probably specialized in the import of nuclear encoded photosynthetic preproteins from the cytoplasm to the chloroplast, especially during early development stages. The chain is Translocase of chloroplast 33, chloroplastic (TOC33) from Arabidopsis thaliana (Mouse-ear cress).